Here is a 90-residue protein sequence, read N- to C-terminus: Alpha-latrotoxin associated low molecular weight protein (90 aa).

The N-terminal stretch at 1–18 is a signal peptide; that stretch reads MNKLFFVVFLCLIISVLA.

Belongs to the arthropod CHH/MIH/GIH/VIH hormone family. Expressed by the venom gland.

Its subcellular location is the secreted. Functionally, may increase the toxicity of alpha-latrotoxin and/or other venom components. Is non-toxic to mice and to the cockroach Periplaneta americana. The chain is Alpha-latrotoxin associated low molecular weight protein from Latrodectus geometricus (Brown widow spider).